The following is a 226-amino-acid chain: Tyramine N-feruloyltransferase 10/30 (226 aa).

The important in binding site and for catalytic activity stretch occupies residues His-29 to His-45. An N-acetyltransferase domain is found at Val-72–Asp-222.

Belongs to the acetyltransferase family. As to quaternary structure, homodimer.

Its subcellular location is the cytoplasm. It carries out the reaction tyramine + (E)-feruloyl-CoA = N-[(E)-feruloyl]tyramine + CoA + H(+). Inhibited by (2-hydroxyphenyl)amino sulfinyl acetic acid 1,1-dimethylethyl ester, by DEPC and by N-ethylmaleimide. Functionally, synthesizes amides which are involved in stress response in the cell wall. Catalyzes the synthesis of hydroxycinnamic acid amides from hydroxycinnamoyl-CoA thioesters and various hydroxyphenylethylamines such as 4-coumaroyl-CoA and sinapoyl-CoA. This is Tyramine N-feruloyltransferase 10/30 (THT10) from Nicotiana tabacum (Common tobacco).